Reading from the N-terminus, the 352-residue chain is MASAEQKHATGNGTTGNGTAMNDVDQPKDAKDLLPHLESLERIIKLPVVNAAWDKSQDVYGKVKGKNRVFEWALTAAEDCVTRAVTTAAPFVTKLDRPIAYVDQTLVKGIDKLEVKAPIIKDTPQEIYNQAKSKVIDVVQPHLERVVKFKAAGQQKAASLKDLAWQKANEVLATQYGSLAVNGVDTTTALAERLLEYYFPKCESDVEEDNDDKQNAVVQNGKSSENDMPVPASEDPVLHTVQTVGRLSNKISRRVYRNVSRQIKQVQKGNINDYLSSLIAALKLHQYINFINSSMGTNVEQSGGSSSDACSPFGTTTSTTTTTTTSSTSNNKPVVALPHVAKSKRAPAVSSQ.

2 disordered regions span residues 1 to 28 (MASAEQKHATGNGTTGNGTAMNDVDQPK) and 298 to 352 (NVEQ…VSSQ). Positions 298-309 (NVEQSGGSSSDA) are enriched in polar residues. Low complexity predominate over residues 315 to 329 (TTTSTTTTTTTSSTS).

The protein belongs to the perilipin family. As to expression, ubiquitous expression in early embryos. At stage 5 expression is restricted to the pole cells. At stage 11 expression is seen in the amnioserosa, refined to the fat body and midgut by stage 14. Also seen in the hindgut by the end of embryogenesis. Expression is seen in larval fat body (at protein level).

It is found in the cytoplasm. Its subcellular location is the lipid droplet. Functionally, essential for embryogenesis. Required for normal deposition of neutral lipids in the oocyte. The protein is Lipid storage droplets surface-binding protein 2 of Drosophila melanogaster (Fruit fly).